The sequence spans 322 residues: Mas-related G-protein coupled receptor member X4 (322 aa).

The Extracellular segment spans residues 1–31; it reads MDPTVPVFGTKLTPINGREETPCYNQTLSFT. N-linked (GlcNAc...) asparagine glycosylation is present at Asn25. The helical transmembrane segment at 32–52 threads the bilayer; that stretch reads VLTCIISLVGLTGNAVVLWLL. At 53–60 the chain is on the cytoplasmic side; the sequence is GYRMRRNA. A helical transmembrane segment spans residues 61-81; sequence VSIYILNLAAADFLFLSFQII. The Extracellular segment spans residues 82-96; that stretch reads RLPLRLINISHLIRK. A glycan (N-linked (GlcNAc...) asparagine) is linked at Asn89. A helical membrane pass occupies residues 97 to 117; that stretch reads ILVSVMTFPYFTGLSMLSAIS. The Cytoplasmic portion of the chain corresponds to 118-137; that stretch reads TERCLSVLWPIWYRCRRPTH. The chain crosses the membrane as a helical span at residues 138 to 158; it reads LSAVVCVLLWGLSLLFSMLEW. The Extracellular portion of the chain corresponds to 159-177; that stretch reads RFCDFLFSGADSSWCETSD. The helical transmembrane segment at 178–198 threads the bilayer; that stretch reads FIPVAWLIFLCVVLCVSSLVL. Residues 199 to 218 lie on the Cytoplasmic side of the membrane; that stretch reads LVRILCGSRKMPLTRLYVTI. The chain crosses the membrane as a helical span at residues 219–239; the sequence is LLTVLVFLLCGLPFGILGALI. Residues 240 to 254 lie on the Extracellular side of the membrane; that stretch reads YRMHLNLEVLYCHVY. Residues 255–275 form a helical membrane-spanning segment; it reads LVCMSLSSLNSSANPIIYFFV. Residues 276 to 322 are Cytoplasmic-facing; sequence GSFRQRQNRQNLKLVLQRALQDKPEVDKGEGQLPEESLELSGSRLGP. The disordered stretch occupies residues 299–322; the sequence is PEVDKGEGQLPEESLELSGSRLGP.

The protein belongs to the G-protein coupled receptor 1 family. Mas subfamily. In terms of tissue distribution, uniquely localized in a subset of small dorsal root and trigeminal sensory neurons.

It is found in the cell membrane. Functionally, orphan receptor. Probably involved in the function of nociceptive neurons. May regulate nociceptor function and/or development, including the sensation or modulation of pain. Potently activated by enkephalins. The protein is Mas-related G-protein coupled receptor member X4 (MRGPRX4) of Homo sapiens (Human).